We begin with the raw amino-acid sequence, 223 residues long: DnaJ homolog subfamily B member 9 (223 aa).

Positions 1 to 23 (MATPQSIFIFAICILMITELILA) are cleaved as a signal peptide. Positions 26 to 90 (SYYDILGVPK…NRRKEYDTLG (65 aa)) constitute a J domain. The tract at residues 91–223 (HSAFTSGKGQ…VTTYTDCSGQ (133 aa)) is divergent targeting domain. Serine 133 bears the Phosphoserine mark.

In terms of assembly, interacts with HSPA5/BiP; interaction is direct. Interacts with ERN1/IRE1 (via the luminal region). Interacts with DERL1. Widely expressed. Expressed at highest level in the liver, placenta and kidney.

The protein localises to the endoplasmic reticulum lumen. In terms of biological role, co-chaperone for Hsp70 protein HSPA5/BiP that acts as a key repressor of the ERN1/IRE1-mediated unfolded protein response (UPR). J domain-containing co-chaperones stimulate the ATPase activity of Hsp70 proteins and are required for efficient substrate recognition by Hsp70 proteins. In the unstressed endoplasmic reticulum, interacts with the luminal region of ERN1/IRE1 and selectively recruits HSPA5/BiP: HSPA5/BiP disrupts the dimerization of the active ERN1/IRE1 luminal region, thereby inactivating ERN1/IRE1. Also involved in endoplasmic reticulum-associated degradation (ERAD) of misfolded proteins. Required for survival of B-cell progenitors and normal antibody production. The chain is DnaJ homolog subfamily B member 9 (DNAJB9) from Homo sapiens (Human).